The primary structure comprises 861 residues: Isoleucine--tRNA ligase (861 aa).

The 'HIGH' region motif lies at 57-67; it reads PYANGNIHVGH. Glutamate 549 contacts L-isoleucyl-5'-AMP. Positions 590–594 match the 'KMSKS' region motif; the sequence is KMSKS. Lysine 593 contacts ATP.

This sequence belongs to the class-I aminoacyl-tRNA synthetase family. IleS type 1 subfamily. Monomer.

Its subcellular location is the cytoplasm. The enzyme catalyses tRNA(Ile) + L-isoleucine + ATP = L-isoleucyl-tRNA(Ile) + AMP + diphosphate. Functionally, catalyzes the attachment of isoleucine to tRNA(Ile). As IleRS can inadvertently accommodate and process structurally similar amino acids such as valine, to avoid such errors it has two additional distinct tRNA(Ile)-dependent editing activities. One activity is designated as 'pretransfer' editing and involves the hydrolysis of activated Val-AMP. The other activity is designated 'posttransfer' editing and involves deacylation of mischarged Val-tRNA(Ile). This is Isoleucine--tRNA ligase from Mycoplasma pneumoniae (strain ATCC 29342 / M129 / Subtype 1) (Mycoplasmoides pneumoniae).